Consider the following 417-residue polypeptide: Serine hydroxymethyltransferase (417 aa).

Residues Leu121 and 125-127 (GHL) contribute to the (6S)-5,6,7,8-tetrahydrofolate site. An N6-(pyridoxal phosphate)lysine modification is found at Lys229. Position 355–357 (355–357 (SPF)) interacts with (6S)-5,6,7,8-tetrahydrofolate.

The protein belongs to the SHMT family. Homodimer. The cofactor is pyridoxal 5'-phosphate.

The protein resides in the cytoplasm. It catalyses the reaction (6R)-5,10-methylene-5,6,7,8-tetrahydrofolate + glycine + H2O = (6S)-5,6,7,8-tetrahydrofolate + L-serine. It participates in one-carbon metabolism; tetrahydrofolate interconversion. It functions in the pathway amino-acid biosynthesis; glycine biosynthesis; glycine from L-serine: step 1/1. Catalyzes the reversible interconversion of serine and glycine with tetrahydrofolate (THF) serving as the one-carbon carrier. This reaction serves as the major source of one-carbon groups required for the biosynthesis of purines, thymidylate, methionine, and other important biomolecules. Also exhibits THF-independent aldolase activity toward beta-hydroxyamino acids, producing glycine and aldehydes, via a retro-aldol mechanism. The sequence is that of Serine hydroxymethyltransferase from Salmonella arizonae (strain ATCC BAA-731 / CDC346-86 / RSK2980).